A 363-amino-acid chain; its full sequence is tRNA N6-adenosine threonylcarbamoyltransferase (363 aa).

2 residues coordinate Fe cation: histidine 121 and histidine 125. Substrate is bound by residues 143–147, aspartate 176, glycine 189, and asparagine 287; that span reads LASGG. Aspartate 315 provides a ligand contact to Fe cation.

It belongs to the KAE1 / TsaD family. It depends on Fe(2+) as a cofactor.

Its subcellular location is the cytoplasm. It carries out the reaction L-threonylcarbamoyladenylate + adenosine(37) in tRNA = N(6)-L-threonylcarbamoyladenosine(37) in tRNA + AMP + H(+). Required for the formation of a threonylcarbamoyl group on adenosine at position 37 (t(6)A37) in tRNAs that read codons beginning with adenine. Is involved in the transfer of the threonylcarbamoyl moiety of threonylcarbamoyl-AMP (TC-AMP) to the N6 group of A37, together with TsaE and TsaB. TsaD likely plays a direct catalytic role in this reaction. The protein is tRNA N6-adenosine threonylcarbamoyltransferase of Rhodopseudomonas palustris (strain BisA53).